A 515-amino-acid polypeptide reads, in one-letter code: Maturase K (515 aa).

The protein belongs to the intron maturase 2 family. MatK subfamily.

Its subcellular location is the plastid. It is found in the chloroplast. In terms of biological role, usually encoded in the trnK tRNA gene intron. Probably assists in splicing its own and other chloroplast group II introns. The sequence is that of Maturase K from Pinus leiophylla (Chihuahua pine).